A 373-amino-acid chain; its full sequence is Beta sliding clamp homolog GriR (373 aa).

This sequence belongs to the beta sliding clamp family. Forms a ring-shaped head-to-tail homodimer around DNA which binds and tethers DNA polymerases and other proteins to the DNA. The DNA replisome complex has a single clamp-loading complex (3 tau and 1 each of delta, delta', psi and chi subunits) which binds 3 Pol III cores (1 core on the leading strand and 2 on the lagging strand) each with a beta sliding clamp dimer. Additional proteins in the replisome are other copies of gamma, psi and chi, Ssb, DNA helicase and RNA primase.

It localises to the cytoplasm. A homolog of the beta sliding clamp protein encoded within the biosynthetic cluster for griselimycin synthesis. Upon expression in S.coelicolor A3(2), which is susceptible to this antibiotic, confers resistance to griselimycin. The beta sliding clamp confers DNA tethering and processivity to DNA polymerases and other proteins. Acts as a clamp, forming a ring around DNA (a reaction catalyzed by the clamp-loading complex) which diffuses in an ATP-independent manner freely and bidirectionally along dsDNA. Initially characterized for its ability to contact the catalytic subunit of DNA polymerase III (Pol III), a complex, multichain enzyme responsible for most of the replicative synthesis in bacteria; Pol III exhibits 3'-5' exonuclease proofreading activity. The beta chain is required for initiation of replication as well as for processivity of DNA replication. The protein is Beta sliding clamp homolog GriR of Streptomyces muensis.